A 186-amino-acid polypeptide reads, in one-letter code: MAKAIKRIQKIEVTEEDQRKRDLREIEDALIDHKEAILETLHMLGHMNERGVLPLLRGLFGQGDKVLDILVKKADTEETANTLKNLLLLFGTLGMLDVKQLEPLILKVNAGVASAVEQKNSEEKTGYFDIIRSLKDPEINKSITLLFSFLKGMGQDTKELERTTQPPEHQKHHQEPREKRGMNKRD.

Residues 156 to 186 (DTKELERTTQPPEHQKHHQEPREKRGMNKRD) are disordered. Residues 173-186 (HQEPREKRGMNKRD) show a composition bias toward basic and acidic residues.

This is an uncharacterized protein from Bacillus subtilis (strain 168).